A 122-amino-acid chain; its full sequence is NADH-quinone oxidoreductase subunit A (122 aa).

The next 3 membrane-spanning stretches (helical) occupy residues 10–30 (MIVLIFLLLGILLPVVALTLG), 66–86 (IFALLFVIFDVETLFLYPWAV), and 91–111 (LGLFALIEMLIFVVMLLVGLA).

It belongs to the complex I subunit 3 family. In terms of assembly, NDH-1 is composed of 14 different subunits. Subunits NuoA, H, J, K, L, M, N constitute the membrane sector of the complex.

The protein localises to the cell membrane. The enzyme catalyses a quinone + NADH + 5 H(+)(in) = a quinol + NAD(+) + 4 H(+)(out). Functionally, NDH-1 shuttles electrons from NADH, via FMN and iron-sulfur (Fe-S) centers, to quinones in the respiratory chain. The immediate electron acceptor for the enzyme in this species is believed to be a menaquinone. Couples the redox reaction to proton translocation (for every two electrons transferred, four hydrogen ions are translocated across the cytoplasmic membrane), and thus conserves the redox energy in a proton gradient. This chain is NADH-quinone oxidoreductase subunit A, found in Bacillus mycoides (strain KBAB4) (Bacillus weihenstephanensis).